The sequence spans 603 residues: Probable methyltransferase-like protein 25 (603 aa).

The interval 326-352 (TSSQQIPNRETSEANKERRKMTSKSSE) is disordered.

In terms of biological role, probable methyltransferase. In Homo sapiens (Human), this protein is Probable methyltransferase-like protein 25 (METTL25).